The primary structure comprises 320 residues: Heterogeneous nuclear ribonucleoprotein A1 (320 aa).

Methionine 1 carries the post-translational modification N-acetylmethionine. N-acetylserine; in Heterogeneous nuclear ribonucleoprotein A1, N-terminally processed is present on serine 2. Position 2 is a phosphoserine (serine 2). Lysine 3 is subject to N6-acetyllysine; alternate. Lysine 3 participates in a covalent cross-link: Glycyl lysine isopeptide (Lys-Gly) (interchain with G-Cter in SUMO2); alternate. 2 positions are modified to phosphoserine: serine 4 and serine 6. Positions 4-94 (SESPKEPEQL…EPKRAVSRED (91 aa)) are globular A domain. Residue lysine 8 forms a Glycyl lysine isopeptide (Lys-Gly) (interchain with G-Cter in SUMO2) linkage. RRM domains lie at 14-97 (RKLF…DSQR) and 105-184 (KKIF…LSKQ). Phosphoserine is present on serine 22. Lysine 78 participates in a covalent cross-link: Glycyl lysine isopeptide (Lys-Gly) (interchain with G-Cter in SUMO2). Positions 95 to 185 (SQRPGAHLTV…EVRKALSKQE (91 aa)) are globular B domain. Lysine 113 is covalently cross-linked (Glycyl lysine isopeptide (Lys-Gly) (interchain with G-Cter in SUMO)). Glycyl lysine isopeptide (Lys-Gly) (interchain with G-Cter in SUMO2) cross-links involve residues lysine 179 and lysine 183. The interval 182-216 (SKQEMASASSSQRGRSGSGNFGGGRGGGFGGNDNF) is disordered. Serine 192 is modified (phosphoserine; by MKNK2). Position 194 is an asymmetric dimethylarginine; alternate (arginine 194). At arginine 194 the chain carries Dimethylated arginine; alternate. An Omega-N-methylarginine; alternate modification is found at arginine 194. Positions 197 to 216 (SGSGNFGGGRGGGFGGNDNF) are enriched in gly residues. Phosphoserine is present on serine 199. An asymmetric dimethylarginine; alternate mark is found at arginine 206, arginine 218, arginine 225, and arginine 232. Dimethylated arginine; alternate is present on arginine 206. Omega-N-methylarginine; alternate occurs at positions 206, 218, 225, and 232. The segment at 218–240 (RGGNFSGRGGFGGSRGGGGYGGS) is RNA-binding RGG-box. Arginine 225 bears the Dimethylated arginine; alternate mark. The segment at 268-305 (NQSSNFGPMKGGNFGGRSLGPYGGGGQYFAKPRNQGGY) is nuclear targeting sequence. Residues 277–294 (KGGNFGGRSLGPYGGGGQ) are compositionally biased toward gly residues. Positions 277–320 (KGGNFGGRSLGPYGGGGQYFAKPRNQGGYGGSSSSSSYGSGRRF) are disordered. Arginine 284 carries the omega-N-methylarginine modification. Serine 285 bears the Phosphoserine mark. Lysine 298 is modified (N6-acetyllysine; alternate). Lysine 298 participates in a covalent cross-link: Glycyl lysine isopeptide (Lys-Gly) (interchain with G-Cter in SUMO2); alternate. Residue arginine 300 is modified to Omega-N-methylarginine. Positions 308–320 (SSSSSSYGSGRRF) are enriched in low complexity. The residue at position 309 (serine 309) is a Phosphoserine. Phosphoserine; by MKNK2 occurs at positions 310, 311, and 312. Phosphoserine occurs at positions 313 and 316. Arginine 318 is modified (omega-N-methylarginine).

As to quaternary structure, identified in the spliceosome C complex. Identified in a IGF2BP1-dependent mRNP granule complex containing untranslated mRNAs. Interacts with SEPT6, C9orf72, KHDRBS1, UBQLN2. Interacts with PPIA/CYPA. Post-translationally, sumoylated.

The protein resides in the nucleus. It is found in the cytoplasm. In terms of biological role, involved in the packaging of pre-mRNA into hnRNP particles, transport of poly(A) mRNA from the nucleus to the cytoplasm and modulation of splice site selection. Plays a role in the splicing of pyruvate kinase PKM by binding repressively to sequences flanking PKM exon 9, inhibiting exon 9 inclusion and resulting in exon 10 inclusion and production of the PKM M2 isoform. Binds to the IRES and thereby inhibits the translation of the apoptosis protease activating factor APAF1. May bind to specific miRNA hairpins. This is Heterogeneous nuclear ribonucleoprotein A1 (HNRNPA1) from Macaca mulatta (Rhesus macaque).